We begin with the raw amino-acid sequence, 454 residues long: Bifunctional protein GlmU (454 aa).

Positions 1 to 232 are pyrophosphorylase; that stretch reads MTDRTCLSIV…VDNVIGINNR (232 aa). UDP-N-acetyl-alpha-D-glucosamine is bound by residues 11-14, K25, Q78, and 83-84; these read LAAG and GT. D108 provides a ligand contact to Mg(2+). Residues G144, E158, N173, and N230 each contribute to the UDP-N-acetyl-alpha-D-glucosamine site. Residue N230 coordinates Mg(2+). Positions 233 to 253 are linker; the sequence is AELAEAETIWQNRKRRELMLS. Residues 254 to 454 form an N-acetyltransferase region; that stretch reads GVTLIAPETV…AIKAAKSVSK (201 aa). UDP-N-acetyl-alpha-D-glucosamine is bound by residues R319 and K337. The Proton acceptor role is filled by H349. Positions 352 and 363 each coordinate UDP-N-acetyl-alpha-D-glucosamine. Acetyl-CoA-binding positions include A366, 372–373, S391, S409, and R426; that span reads NY.

The protein in the N-terminal section; belongs to the N-acetylglucosamine-1-phosphate uridyltransferase family. It in the C-terminal section; belongs to the transferase hexapeptide repeat family. In terms of assembly, homotrimer. The cofactor is Mg(2+).

The protein localises to the cytoplasm. The catalysed reaction is alpha-D-glucosamine 1-phosphate + acetyl-CoA = N-acetyl-alpha-D-glucosamine 1-phosphate + CoA + H(+). It catalyses the reaction N-acetyl-alpha-D-glucosamine 1-phosphate + UTP + H(+) = UDP-N-acetyl-alpha-D-glucosamine + diphosphate. Its pathway is nucleotide-sugar biosynthesis; UDP-N-acetyl-alpha-D-glucosamine biosynthesis; N-acetyl-alpha-D-glucosamine 1-phosphate from alpha-D-glucosamine 6-phosphate (route II): step 2/2. It functions in the pathway nucleotide-sugar biosynthesis; UDP-N-acetyl-alpha-D-glucosamine biosynthesis; UDP-N-acetyl-alpha-D-glucosamine from N-acetyl-alpha-D-glucosamine 1-phosphate: step 1/1. The protein operates within bacterial outer membrane biogenesis; LPS lipid A biosynthesis. Catalyzes the last two sequential reactions in the de novo biosynthetic pathway for UDP-N-acetylglucosamine (UDP-GlcNAc). The C-terminal domain catalyzes the transfer of acetyl group from acetyl coenzyme A to glucosamine-1-phosphate (GlcN-1-P) to produce N-acetylglucosamine-1-phosphate (GlcNAc-1-P), which is converted into UDP-GlcNAc by the transfer of uridine 5-monophosphate (from uridine 5-triphosphate), a reaction catalyzed by the N-terminal domain. The sequence is that of Bifunctional protein GlmU from Brucella melitensis biotype 1 (strain ATCC 23456 / CCUG 17765 / NCTC 10094 / 16M).